Here is a 434-residue protein sequence, read N- to C-terminus: MSIITDVYAREVLDSRGNPTLEVEVYTESGAFGRGMVPSGASTGEHEAVELRDGDKSRYGGLGTQKAVDNVNNIIAEAVIGYDVRDQQAIDRAMIALDGTPNKGKLGANAILGVSIAVARAAADYLEIPLYSYLGGFNTKVLPTPMMNIINGGSHSDAPIAFQEFMIVPAGAPTFKEALRWGAEIFHALKKILKSRGLATAVGDEGGFAPRFDGTEDGVETILAAIEAAGYVPGKDVFLGFDCASSEFYDKERKVYDYTKFEGEGAAVRTADEQIDYLEELVNKYPIITIEDGMDENDWDGWKKLTERLGKKVQPVGDDFFVTNTSYLEKGINEACANSILIKVNQIGTLTETFDAIEMAKEAGYTAVVSHRSGETEDSTIADIAVAANAGQIKTGSLSRTDRIAKYNQLLRIEDQLGEVAEYRGLKSFYNLSK.

Residue Q163 coordinates (2R)-2-phosphoglycerate. E205 functions as the Proton donor in the catalytic mechanism. D242, E291, and D318 together coordinate Mg(2+). (2R)-2-phosphoglycerate-binding residues include K343, R372, S373, and K394. K343 serves as the catalytic Proton acceptor.

The protein belongs to the enolase family. Mg(2+) is required as a cofactor.

It localises to the cytoplasm. The protein localises to the secreted. It is found in the cell surface. The catalysed reaction is (2R)-2-phosphoglycerate = phosphoenolpyruvate + H2O. The protein operates within carbohydrate degradation; glycolysis; pyruvate from D-glyceraldehyde 3-phosphate: step 4/5. Its function is as follows. Catalyzes the reversible conversion of 2-phosphoglycerate (2-PG) into phosphoenolpyruvate (PEP). It is essential for the degradation of carbohydrates via glycolysis. The protein is Enolase of Streptococcus intermedius.